The chain runs to 366 residues: 3-dehydroquinate synthase (366 aa).

Residues 73-78 (DGERAK), 107-111 (GVVGD), 131-132 (TT), Lys-144, and Lys-153 contribute to the NAD(+) site. Zn(2+) is bound by residues Glu-186, His-249, and His-266.

This sequence belongs to the sugar phosphate cyclases superfamily. Dehydroquinate synthase family. Co(2+) serves as cofactor. The cofactor is Zn(2+). NAD(+) is required as a cofactor.

Its subcellular location is the cytoplasm. It carries out the reaction 7-phospho-2-dehydro-3-deoxy-D-arabino-heptonate = 3-dehydroquinate + phosphate. It participates in metabolic intermediate biosynthesis; chorismate biosynthesis; chorismate from D-erythrose 4-phosphate and phosphoenolpyruvate: step 2/7. Catalyzes the conversion of 3-deoxy-D-arabino-heptulosonate 7-phosphate (DAHP) to dehydroquinate (DHQ). This chain is 3-dehydroquinate synthase, found in Koribacter versatilis (strain Ellin345).